A 154-amino-acid polypeptide reads, in one-letter code: 6,7-dimethyl-8-ribityllumazine synthase (154 aa).

Residues F22, 56–58 (AFE), and 80–82 (TVI) each bind 5-amino-6-(D-ribitylamino)uracil. Residue 85–86 (AT) coordinates (2S)-2-hydroxy-3-oxobutyl phosphate. Catalysis depends on H88, which acts as the Proton donor. F113 serves as a coordination point for 5-amino-6-(D-ribitylamino)uracil. A (2S)-2-hydroxy-3-oxobutyl phosphate-binding site is contributed by R127.

This sequence belongs to the DMRL synthase family. As to quaternary structure, forms an icosahedral capsid composed of 60 subunits, arranged as a dodecamer of pentamers.

It catalyses the reaction (2S)-2-hydroxy-3-oxobutyl phosphate + 5-amino-6-(D-ribitylamino)uracil = 6,7-dimethyl-8-(1-D-ribityl)lumazine + phosphate + 2 H2O + H(+). It participates in cofactor biosynthesis; riboflavin biosynthesis; riboflavin from 2-hydroxy-3-oxobutyl phosphate and 5-amino-6-(D-ribitylamino)uracil: step 1/2. Functionally, catalyzes the formation of 6,7-dimethyl-8-ribityllumazine by condensation of 5-amino-6-(D-ribitylamino)uracil with 3,4-dihydroxy-2-butanone 4-phosphate. This is the penultimate step in the biosynthesis of riboflavin. This is 6,7-dimethyl-8-ribityllumazine synthase from Bacillus licheniformis (strain ATCC 14580 / DSM 13 / JCM 2505 / CCUG 7422 / NBRC 12200 / NCIMB 9375 / NCTC 10341 / NRRL NRS-1264 / Gibson 46).